The primary structure comprises 178 residues: Small ribosomal subunit protein uS4 (178 aa).

An S4 RNA-binding domain is found at 104–166; the sequence is RRLQTIVYRK…PNSPMASENH (63 aa). The segment at 158 to 178 is disordered; the sequence is NSPMASENHPERTAAVSEENQ.

It belongs to the universal ribosomal protein uS4 family. Part of the 30S ribosomal subunit. Contacts protein S5. The interaction surface between S4 and S5 is involved in control of translational fidelity.

In terms of biological role, one of the primary rRNA binding proteins, it binds directly to 16S rRNA where it nucleates assembly of the body of the 30S subunit. Functionally, with S5 and S12 plays an important role in translational accuracy. The chain is Small ribosomal subunit protein uS4 from Methanococcus maripaludis (strain C6 / ATCC BAA-1332).